We begin with the raw amino-acid sequence, 697 residues long: Long-chain-fatty-acid--CoA ligase 6 (697 aa).

Residues 25–45 (LSATTLVSMGALAAILAYWLT) traverse the membrane as a helical; Signal-anchor for type III membrane protein segment. The Cytoplasmic segment spans residues 46-697 (HRPKALQPPC…QIEELYSISM (652 aa)).

This sequence belongs to the ATP-dependent AMP-binding enzyme family. Mg(2+) serves as cofactor. In terms of tissue distribution, expressed predominantly in brain and, to a much lesser extent, in heart and adrenal.

It is found in the mitochondrion outer membrane. Its subcellular location is the peroxisome membrane. It localises to the microsome membrane. The protein resides in the endoplasmic reticulum membrane. The catalysed reaction is a long-chain fatty acid + ATP + CoA = a long-chain fatty acyl-CoA + AMP + diphosphate. It carries out the reaction (5Z,8Z,11Z,14Z)-eicosatetraenoate + ATP + CoA = (5Z,8Z,11Z,14Z)-eicosatetraenoyl-CoA + AMP + diphosphate. It catalyses the reaction 15-hydroxy-(5Z,8Z,11Z,13E)-eicosatetraenoate + ATP + CoA = 15-hydroxy-(5Z,8Z,11Z,13E)-eicosatetraenoyl-CoA + AMP + diphosphate. The enzyme catalyses 12-hydroxy-(5Z,8Z,10E,14Z)-eicosatetraenoate + ATP + CoA = 12-hydroxy-(5Z,8Z,10E,14Z)-eicosatetraenoyl-CoA + AMP + diphosphate. The catalysed reaction is 5-hydroxy-(6E,8Z,11Z,14Z)-eicosatetraenoate + ATP + CoA = 5-hydroxy-(6E,8Z,11Z,14Z)-eicosatetraenoyl-CoA + AMP + diphosphate. It carries out the reaction hexadecanoate + ATP + CoA = hexadecanoyl-CoA + AMP + diphosphate. It catalyses the reaction (E)-hexadec-2-enoate + ATP + CoA = (2E)-hexadecenoyl-CoA + AMP + diphosphate. Functionally, catalyzes the conversion of long-chain fatty acids to their active form acyl-CoA for both synthesis of cellular lipids, and degradation via beta-oxidation. Plays an important role in fatty acid metabolism in brain and the acyl-CoAs produced may be utilized exclusively for the synthesis of the brain lipid. The sequence is that of Long-chain-fatty-acid--CoA ligase 6 from Rattus norvegicus (Rat).